The sequence spans 238 residues: Uridylate kinase (238 aa).

12–15 is an ATP binding site; it reads KLSG. An involved in allosteric activation by GTP region spans residues 20–25; it reads GEKGFG. Glycine 54 contributes to the UMP binding site. Glycine 55 and arginine 59 together coordinate ATP. UMP-binding positions include aspartate 72 and 133 to 140; that span reads TGNPYFST. Positions 166 and 169 each coordinate ATP.

Belongs to the UMP kinase family. Homohexamer.

It localises to the cytoplasm. The catalysed reaction is UMP + ATP = UDP + ADP. It functions in the pathway pyrimidine metabolism; CTP biosynthesis via de novo pathway; UDP from UMP (UMPK route): step 1/1. With respect to regulation, allosterically activated by GTP. Inhibited by UTP. Its function is as follows. Catalyzes the reversible phosphorylation of UMP to UDP. The polypeptide is Uridylate kinase (Clostridium botulinum (strain Langeland / NCTC 10281 / Type F)).